Reading from the N-terminus, the 415-residue chain is Succinate--CoA ligase [GDP-forming] subunit beta, mitochondrial (415 aa).

The N-terminal 19 residues, 1-19 (MLRAAGNLSKSMMKSQRRF), are a transit peptide targeting the mitochondrion. Residues 28–258 (KEILEKHGCS…SAAYRQKEIF (231 aa)) form the ATP-grasp domain. GTP is bound by residues glutamine 39, 72 to 74 (GRG), and valine 130. Mg(2+) contacts are provided by asparagine 227 and aspartate 241. Substrate-binding positions include asparagine 292 and 349 to 351 (GIV).

It belongs to the succinate/malate CoA ligase beta subunit family. GTP-specific subunit beta subfamily. Heterodimer of an alpha and a beta subunit. The beta subunit determines specificity for GTP. The cofactor is Mg(2+).

The protein resides in the mitochondrion. It carries out the reaction GTP + succinate + CoA = succinyl-CoA + GDP + phosphate. It participates in carbohydrate metabolism; tricarboxylic acid cycle; succinate from succinyl-CoA (ligase route): step 1/1. Its function is as follows. GTP-specific succinyl-CoA synthetase functions in the citric acid cycle (TCA), coupling the hydrolysis of succinyl-CoA to the synthesis of GTP and thus represents the only step of substrate-level phosphorylation in the TCA. The beta subunit provides nucleotide specificity of the enzyme and binds the substrate succinate, while the binding sites for coenzyme A and phosphate are found in the alpha subunit. The protein is Succinate--CoA ligase [GDP-forming] subunit beta, mitochondrial of Caenorhabditis elegans.